The following is a 522-amino-acid chain: Protein GDS1 (522 aa).

4 disordered regions span residues 56 to 88, 222 to 268, 300 to 391, and 433 to 489; these read ALDD…PKKD, QQLE…SSNS, LSPS…SHNA, and STQT…SRNE. A compositionally biased stretch (polar residues) spans 62 to 73; sequence LAGSSFSSSQEI. Residues 74-88 are compositionally biased toward basic and acidic residues; that stretch reads KATKPKKDFGAPKKD. Composition is skewed to polar residues over residues 222 to 236, 244 to 260, 300 to 314, and 355 to 366; these read QQLE…FNSN, SSNQ…SMTD, LSPS…LLTP, and SQSLSVLSTPKK. Positions 368 to 378 are enriched in low complexity; it reads SSASLSTFASS. A compositionally biased stretch (polar residues) spans 379–391; sequence KNISPDSSLSHNA. Residues 439-467 are compositionally biased toward low complexity; sequence ESSSESSQYNSSSSSPVNSAAASSAESLS. Positions 468-489 are enriched in polar residues; sequence DINSSQDNGRESNPSSQESRNE.

Its function is as follows. Involved in nuclear control of mitochondria. The sequence is that of Protein GDS1 (GDS1) from Saccharomyces cerevisiae (strain ATCC 204508 / S288c) (Baker's yeast).